Reading from the N-terminus, the 544-residue chain is MAIGKRLLVNKPAEESFYASPMYDFLYPFRPVGNQWLPEYIIFVCAVILRCTIGLGPYSGKGSPPLYGDFEAQRHWMEITQHLPLSKWYWYDLQYWGLDYPPLTAFHSYLLGLIGSFFNPSWFALEKSRGFESPDNGLKTYMRSTVIISDILFYFPAVIYFTKWLGRYRNQSPIGQSIAASAILFQPSLMLIDHGHFQYNSVMLGLTAYAINNLLDEYYAMAAVCFVLSICFKQMALYYAPIFFAYLLSRSLLFPKFNIARLTVIAFATLATFAIIFAPLYFLGGGLKNIHQCIHRIFPFARGIFEDKVANFWCVTNVFVKYKERFTIQQLQLYSLIATVIGFLPAMIMTLLHPKKHLLPYVLIACSMSFFLFSFQVHEKTILIPLLPITLLYSSTDWNVLSLVSWINNVALFTLWPLLKKDGLHLQYAVSFLLSNWLIGNFSFITPRFLPKSLTPGPSISSINSDYRRRSLLPYNVVWKSFIIGTYIAMGFYHFLDQFVAPPSKYPDLWVLLNCAVGFICFSIFWLWSYYKIFTSGSKSMKDL.

Residues 1–35 (MAIGKRLLVNKPAEESFYASPMYDFLYPFRPVGNQ) are Cytoplasmic-facing. A helical transmembrane segment spans residues 36–56 (WLPEYIIFVCAVILRCTIGLG). At 57–104 (PYSGKGSPPLYGDFEAQRHWMEITQHLPLSKWYWYDLQYWGLDYPPLT) the chain is on the lumenal side. Residues 105-125 (AFHSYLLGLIGSFFNPSWFAL) traverse the membrane as a helical segment. Over 126 to 145 (EKSRGFESPDNGLKTYMRST) the chain is Cytoplasmic. The helical transmembrane segment at 146–166 (VIISDILFYFPAVIYFTKWLG) threads the bilayer. Topologically, residues 167–223 (RYRNQSPIGQSIAASAILFQPSLMLIDHGHFQYNSVMLGLTAYAINNLLDEYYAMAA) are lumenal. A helical transmembrane segment spans residues 224 to 244 (VCFVLSICFKQMALYYAPIFF). Topologically, residues 245 to 263 (AYLLSRSLLFPKFNIARLT) are cytoplasmic. A helical membrane pass occupies residues 264–284 (VIAFATLATFAIIFAPLYFLG). The Lumenal portion of the chain corresponds to 285 to 332 (GGLKNIHQCIHRIFPFARGIFEDKVANFWCVTNVFVKYKERFTIQQLQ). Residues 333–353 (LYSLIATVIGFLPAMIMTLLH) traverse the membrane as a helical segment. Residues 354-356 (PKK) are Cytoplasmic-facing. A helical membrane pass occupies residues 357–377 (HLLPYVLIACSMSFFLFSFQV). At 378-398 (HEKTILIPLLPITLLYSSTDW) the chain is on the lumenal side. Residues 399–419 (NVLSLVSWINNVALFTLWPLL) form a helical membrane-spanning segment. At 420–425 (KKDGLH) the chain is on the cytoplasmic side. The helical transmembrane segment at 426–446 (LQYAVSFLLSNWLIGNFSFIT) threads the bilayer. Residues 447-481 (PRFLPKSLTPGPSISSINSDYRRRSLLPYNVVWKS) lie on the Lumenal side of the membrane. Residues 482–502 (FIIGTYIAMGFYHFLDQFVAP) form a helical membrane-spanning segment. The Cytoplasmic segment spans residues 503 to 508 (PSKYPD). Residues 509–529 (LWVLLNCAVGFICFSIFWLWS) form a helical membrane-spanning segment. The Lumenal segment spans residues 530-544 (YYKIFTSGSKSMKDL).

It belongs to the ALG6/ALG8 glucosyltransferase family.

Its subcellular location is the endoplasmic reticulum membrane. It carries out the reaction an alpha-D-Man-(1-&gt;2)-alpha-D-Man-(1-&gt;2)-alpha-D-Man-(1-&gt;3)-[alpha-D-Man-(1-&gt;2)-alpha-D-Man-(1-&gt;3)-[alpha-D-Man-(1-&gt;2)-alpha-D-Man-(1-&gt;6)]-alpha-D-Man-(1-&gt;6)]-beta-D-Man-(1-&gt;4)-beta-D-GlcNAc-(1-&gt;4)-alpha-D-GlcNAc-diphospho-di-trans,poly-cis-dolichol + a di-trans,poly-cis-dolichyl beta-D-glucosyl phosphate = an alpha-D-Glc-(1-&gt;3)-alpha-D-Man-(1-&gt;2)-alpha-D-Man-(1-&gt;2)-alpha-D-Man-(1-&gt;3)-[alpha-D-Man-(1-&gt;2)-alpha-D-Man-(1-&gt;3)-[alpha-D-Man-(1-&gt;2)-alpha-D-Man-(1-&gt;6)]-alpha-D-Man-(1-&gt;6)]-beta-D-Man-(1-&gt;4)-beta-D-GlcNAc-(1-&gt;4)-alpha-D-GlcNAc-diphospho-di-trans,poly-cis-dolichol + a di-trans,poly-cis-dolichyl phosphate + H(+). The protein operates within protein modification; protein glycosylation. In terms of biological role, dolichyl pyrophosphate Man9GlcNAc2 alpha-1,3-glucosyltransferase that operates in the biosynthetic pathway of dolichol-linked oligosaccharides, the glycan precursors employed in protein asparagine (N)-glycosylation. The assembly of dolichol-linked oligosaccharides begins on the cytosolic side of the endoplasmic reticulum membrane and finishes in its lumen. The sequential addition of sugars to dolichol pyrophosphate produces dolichol-linked oligosaccharides containing fourteen sugars, including two GlcNAcs, nine mannoses and three glucoses. Once assembled, the oligosaccharide is transferred from the lipid to nascent proteins by oligosaccharyltransferases. In the lumen of the endoplasmic reticulum, adds the first glucose residue from dolichyl phosphate glucose (Dol-P-Glc) onto the lipid-linked oligosaccharide intermediate Man(9)GlcNAc(2)-PP-Dol to produce Glc(1)Man(9)GlcNAc(2)-PP-Dol. This is Dolichyl pyrophosphate Man9GlcNAc2 alpha-1,3-glucosyltransferase (ALG6) from Saccharomyces cerevisiae (strain ATCC 204508 / S288c) (Baker's yeast).